The following is a 340-amino-acid chain: MTDHALLLANLGSPASTEVADVRRYLNQFLMDPYVIDLPWPLRRLLVSLILIKRPAASAHAYASIWWDEGSPLVVLSRRLQEAMKTHWSHGPVELAMRYGEPSIEATLQRLADQGVRQVTLAPLYPQFADSTTTTVIEEAKRVVRQRSLDLRFSVLPPFYDQPEYLDALVASAKPYLEQGFDHLLLSFHGLPERHLHKLDPSGHCLKGDDCCRTASPAVLATCYRAQCLRSAELFAERMGLRPEQWSVSFQSRLGRAKWIEPYTETRLDELAAQGVKKLLVMCPAFVADCIETLEEIGDRGREQFVEAGGESLQLVPCLNDHPDWVAALKVLCERAPQAL.

Fe cation is bound by residues histidine 189 and glutamate 292.

Belongs to the ferrochelatase family.

It is found in the cytoplasm. It catalyses the reaction heme b + 2 H(+) = protoporphyrin IX + Fe(2+). It functions in the pathway porphyrin-containing compound metabolism; protoheme biosynthesis; protoheme from protoporphyrin-IX: step 1/1. Functionally, catalyzes the ferrous insertion into protoporphyrin IX. The polypeptide is Ferrochelatase (Ectopseudomonas mendocina (strain ymp) (Pseudomonas mendocina)).